The chain runs to 220 residues: GILT-like protein CBG03282 (220 aa).

Positions 1 to 22 (MTIIRTLFVYYSFLFILVLCSS) are cleaved as a signal peptide. Residue Asn131 is glycosylated (N-linked (GlcNAc...) asparagine).

The protein belongs to the GILT family.

The protein resides in the secreted. The polypeptide is GILT-like protein CBG03282 (Caenorhabditis briggsae).